The primary structure comprises 534 residues: Peptide chain release factor 3 (534 aa).

Residues 9–278 (ARRRTFAIIS…FFVEHAPPPQ (270 aa)) form the tr-type G domain. GTP contacts are provided by residues 18–25 (SHPDAGKT), 86–90 (DTPGH), and 140–143 (NKLD).

This sequence belongs to the TRAFAC class translation factor GTPase superfamily. Classic translation factor GTPase family. PrfC subfamily.

Its subcellular location is the cytoplasm. Increases the formation of ribosomal termination complexes and stimulates activities of RF-1 and RF-2. It binds guanine nucleotides and has strong preference for UGA stop codons. It may interact directly with the ribosome. The stimulation of RF-1 and RF-2 is significantly reduced by GTP and GDP, but not by GMP. The polypeptide is Peptide chain release factor 3 (Xanthomonas campestris pv. campestris (strain 8004)).